The primary structure comprises 1237 residues: uncharacterized protein (1237 aa).

The MHD1 domain occupies 591 to 712 (KDMLEIYSDL…IVLSKYTQWT (122 aa)). The region spanning 786–906 (LIEALDVAES…GDYLPREEWF (121 aa)) is the C2 domain. One can recognise an MHD2 domain in the interval 1014–1130 (EAAIYELLDY…KPTDFLLQEC (117 aa)).

This is an uncharacterized protein from Schizosaccharomyces pombe (strain 972 / ATCC 24843) (Fission yeast).